We begin with the raw amino-acid sequence, 444 residues long: UPF0053 protein YhdP (444 aa).

The CNNM transmembrane domain occupies 1-201 (MDIVNLILVA…YKSGEINQSE (201 aa)). A run of 3 helical transmembrane segments spans residues 7–27 (ILVAVLIALTAFFVASEFAII), 61–81 (ACQLGITLTSIGLGVLGESTI), and 101–121 (VISFIFAYAIITFLHVVVGEL). CBS domains are found at residues 220–282 (MIPR…SVDS) and 284–344 (ISQF…IRDE).

It belongs to the UPF0053 family.

The protein localises to the cell membrane. The chain is UPF0053 protein YhdP (yhdP) from Bacillus subtilis (strain 168).